A 240-amino-acid polypeptide reads, in one-letter code: MAGPTIHRDMEKSSGYCEAPENLGLSFSIEAILKKPTERRSLPRPQSICKEDSRQTTIPGSKLERPPQDQPQEEKKNKRRVRTTFTTEQLQELEKLFHFTHYPDIHVRSQLASRINLPEARVQIWFQNQRAKWRKQEKSGNLSAPQQPGEAGLALPSNMDVSGPVLTPTAMTTLVPPTECCLLSQTQLPSSWFPTQIPLVPWHPWDLQPLPGPLTQHPCVPTFMFPPLHPKWGSICATST.

A disordered region spans residues 36–82 (PTERRSLPRPQSICKEDSRQTTIPGSKLERPPQDQPQEEKKNKRRVR). Over residues 62–76 (KLERPPQDQPQEEKK) the composition is skewed to basic and acidic residues. The homeobox DNA-binding region spans 78–137 (KRRVRTTFTTEQLQELEKLFHFTHYPDIHVRSQLASRINLPEARVQIWFQNQRAKWRKQE).

In terms of tissue distribution, expressed in intestinal epithelial cells from the duodenum to the proximal colon.

It is found in the nucleus. Transcription factor that regulates gene expression in intestine. May participate in vitamin A metabolism most likely by regulating BCO1 expression in the intestine. The chain is Intestine-specific homeobox (Isx) from Mus musculus (Mouse).